A 318-amino-acid polypeptide reads, in one-letter code: Ribosomal protein L11 methyltransferase (318 aa).

S-adenosyl-L-methionine is bound by residues threonine 161, glycine 182, aspartate 204, and asparagine 247.

It belongs to the methyltransferase superfamily. PrmA family.

It is found in the cytoplasm. It carries out the reaction L-lysyl-[protein] + 3 S-adenosyl-L-methionine = N(6),N(6),N(6)-trimethyl-L-lysyl-[protein] + 3 S-adenosyl-L-homocysteine + 3 H(+). In terms of biological role, methylates ribosomal protein L11. The sequence is that of Ribosomal protein L11 methyltransferase from Moorella thermoacetica (strain ATCC 39073 / JCM 9320).